A 567-amino-acid polypeptide reads, in one-letter code: Malate synthase, glyoxysomal (567 aa).

Arg-182 acts as the Proton acceptor in catalysis. Asp-468 (proton donor) is an active-site residue. Positions 565–567 (SRL) match the Microbody targeting signal motif.

The protein belongs to the malate synthase family.

It is found in the glyoxysome. The enzyme catalyses glyoxylate + acetyl-CoA + H2O = (S)-malate + CoA + H(+). It functions in the pathway carbohydrate metabolism; glyoxylate cycle; (S)-malate from isocitrate: step 2/2. The protein is Malate synthase, glyoxysomal of Ricinus communis (Castor bean).